Here is a 283-residue protein sequence, read N- to C-terminus: ATP phosphoribosyltransferase (283 aa).

It belongs to the ATP phosphoribosyltransferase family. Long subfamily. Requires Mg(2+) as cofactor.

The protein resides in the cytoplasm. The enzyme catalyses 1-(5-phospho-beta-D-ribosyl)-ATP + diphosphate = 5-phospho-alpha-D-ribose 1-diphosphate + ATP. It participates in amino-acid biosynthesis; L-histidine biosynthesis; L-histidine from 5-phospho-alpha-D-ribose 1-diphosphate: step 1/9. Feedback inhibited by histidine. Functionally, catalyzes the condensation of ATP and 5-phosphoribose 1-diphosphate to form N'-(5'-phosphoribosyl)-ATP (PR-ATP). Has a crucial role in the pathway because the rate of histidine biosynthesis seems to be controlled primarily by regulation of HisG enzymatic activity. This Bacteroides fragilis (strain ATCC 25285 / DSM 2151 / CCUG 4856 / JCM 11019 / LMG 10263 / NCTC 9343 / Onslow / VPI 2553 / EN-2) protein is ATP phosphoribosyltransferase.